We begin with the raw amino-acid sequence, 163 residues long: Nitrogen regulatory protein (163 aa).

Residues 12 to 156 enclose the PTS EIIA type-2 domain; the sequence is SVLNRECTRS…EELYQIITDT (145 aa). Residue His73 is the Tele-phosphohistidine intermediate of the active site.

Its subcellular location is the cytoplasm. Functionally, seems to have a role in regulating nitrogen assimilation. The polypeptide is Nitrogen regulatory protein (ptsN) (Escherichia coli (strain K12)).